The following is a 177-amino-acid chain: Large ribosomal subunit protein uL10 (177 aa).

Belongs to the universal ribosomal protein uL10 family. Part of the ribosomal stalk of the 50S ribosomal subunit. The N-terminus interacts with L11 and the large rRNA to form the base of the stalk. The C-terminus forms an elongated spine to which L12 dimers bind in a sequential fashion forming a multimeric L10(L12)X complex.

Functionally, forms part of the ribosomal stalk, playing a central role in the interaction of the ribosome with GTP-bound translation factors. The polypeptide is Large ribosomal subunit protein uL10 (Xanthomonas axonopodis pv. citri (strain 306)).